The sequence spans 254 residues: SLA class II histocompatibility antigen, DQ haplotype C alpha chain (254 aa).

Positions 1–23 (MVPGRVLMWGALALTTVMSACGG) are cleaved as a signal peptide. Positions 24-120 (EDIAADHVAS…KVPEVTVFSK (97 aa)) are alpha-1. Residues 24 to 216 (EDIAADHVAS…IPAPMSELTE (193 aa)) are Extracellular-facing. Residues Asn104 and Asn144 are each glycosylated (N-linked (GlcNAc...) asparagine). Residues 113-204 (PEVTVFSKSP…LDKPLLKHWE (92 aa)) form the Ig-like C1-type domain. Residues 121 to 203 (SPVILGQPNT…GLDKPLLKHW (83 aa)) form an alpha-2 region. A disulfide bond links Cys133 and Cys188. Residues 204–216 (EPEIPAPMSELTE) are connecting peptide. The chain crosses the membrane as a helical span at residues 217 to 239 (TVVCALGLIVGLVGIVVGTVFII). Residues 240–254 (QGLRSGGPSRHQGSL) are Cytoplasmic-facing.

The protein belongs to the MHC class II family.

The protein resides in the membrane. This is SLA class II histocompatibility antigen, DQ haplotype C alpha chain from Sus scrofa (Pig).